An 877-amino-acid polypeptide reads, in one-letter code: Potassium transporter 23 (877 aa).

Disordered stretches follow at residues 1–60 and 72–92; these read MDDD…SLDG and ASAGGASGGGGGGGPLSRASS. Over 1-126 the chain is Cytoplasmic; that stretch reads MDDDDSGIQE…RGAHGHSSKE (126 aa). Positions 12 to 28 are enriched in pro residues; sequence PAPPPPPPPPPPPPPPL. Over residues 76–86 the composition is skewed to gly residues; that stretch reads GASGGGGGGGP. A helical transmembrane segment spans residues 127-147; it reads ISMLSTVAMAFQTLGVVYGDM. Residues 148–173 are Extracellular-facing; the sequence is GTSPLYVFSDVFSKVPIKSEVEILGA. Residues 174-194 form a helical membrane-spanning segment; the sequence is LSLVMYTIALIPFAKYVFIVL. At 195–260 the chain is on the cytoplasmic side; it reads KANDNGEGGT…SLEKNPVFKN (66 aa). Residues 261–281 traverse the membrane as a helical segment; that stretch reads ILLFLVLMGTSMVIGDGILTP. The Extracellular segment spans residues 282-295; sequence SMSVMSAVSGLQGR. The chain crosses the membrane as a helical span at residues 296–316; sequence VPGFGTDAVVIVSILFLVLLF. Residues 317–325 lie on the Cytoplasmic side of the membrane; sequence SVQRFGTGK. Residues 326 to 346 form a helical membrane-spanning segment; it reads VGFMFAPILALWFINLGTIGI. The Extracellular segment spans residues 347–379; sequence YNLAKYDISVVRAFNPVYIYLFFQTNGIKAWSA. A helical membrane pass occupies residues 380–400; sequence LGGCVLCITGAEAMFADLGHF. The Cytoplasmic portion of the chain corresponds to 401–406; the sequence is SVKSIQ. The helical transmembrane segment at 407-427 threads the bilayer; the sequence is VAFTAVVFPCLLIAYMGQAAY. Over 428-441 the chain is Extracellular; the sequence is LMKYPFAVERIFYD. A helical transmembrane segment spans residues 442–462; the sequence is SVPEILFWPVFVIATLAAMIA. Residues 463–498 are Cytoplasmic-facing; sequence SQAMISATFSCIKQAMALGCFPRIKIIHTSKKVMGQ. Residues 499-519 traverse the membrane as a helical segment; sequence IYIPVMNWFLMVMCIIIVATF. At 520–524 the chain is on the extracellular side; it reads RSTND. Residues 525–545 traverse the membrane as a helical segment; that stretch reads IANAYGIAEVGVMMVSTALVT. At 546–555 the chain is on the cytoplasmic side; sequence LVMLLIWQTN. The chain crosses the membrane as a helical span at residues 556-578; that stretch reads LFLVMCFPVIFGSVEFVYLTAVL. The Extracellular segment spans residues 579–583; the sequence is SKIQE. The helical transmembrane segment at 584–604 threads the bilayer; sequence GGWLPLAFSSLFLCIMYTWNY. At 605-877 the chain is on the cytoplasmic side; sequence GSVLKYQSEM…IMRVGMTYMV (273 aa).

Belongs to the HAK/KUP transporter (TC 2.A.72.3) family.

It localises to the membrane. In terms of biological role, high-affinity potassium transporter. This is Potassium transporter 23 (HAK23) from Oryza sativa subsp. japonica (Rice).